Here is an 84-residue protein sequence, read N- to C-terminus: MHGTCLSGLYPVPFTHNSHDYPHFNIYISFGGPKYCITALNTYVTPLLHRILTTQFIYTYANITKKSPLKSPKHKNILFFNHNT.

It belongs to the UPF0320 family.

The protein is Putative UPF0320 protein YNL337W of Saccharomyces cerevisiae (strain ATCC 204508 / S288c) (Baker's yeast).